We begin with the raw amino-acid sequence, 257 residues long: UPF0246 protein lpg1366 (257 aa).

The protein belongs to the UPF0246 family.

The chain is UPF0246 protein lpg1366 from Legionella pneumophila subsp. pneumophila (strain Philadelphia 1 / ATCC 33152 / DSM 7513).